The primary structure comprises 523 residues: 2-hydroxyisoflavanone synthase (523 aa).

The chain crosses the membrane as a helical span at residues 2 to 22 (LVELAITLLVIALFIHLRPTP). Residue Cys450 participates in heme binding.

The protein belongs to the cytochrome P450 family. It depends on heme as a cofactor.

It localises to the microsome membrane. The catalysed reaction is (2S)-liquiritigenin + reduced [NADPH--hemoprotein reductase] + O2 = (2R,3S)-2,4',7-trihydroxyisoflavanone + oxidized [NADPH--hemoprotein reductase] + H2O + H(+). The enzyme catalyses (2S)-naringenin + reduced [NADPH--hemoprotein reductase] + O2 = 2-hydroxy-2,3-dihydrogenistein + oxidized [NADPH--hemoprotein reductase] + H2O + H(+). Functionally, 2-hydroxyisoflavanone synthase, which catalyzes the hydroxylation associated with 1,2-aryl migration of flavanones. Converts liquiritigenin and naringenin into highly unstable precursors of the isoflavones daidzein and genistein. The chain is 2-hydroxyisoflavanone synthase (CYP93C2) from Glycyrrhiza uralensis (Chinese licorice).